Consider the following 447-residue polypeptide: GTPase Der (447 aa).

2 consecutive EngA-type G domains span residues 4–165 (QIIT…PEEE) and 180–357 (LQIV…KIWN). Residues 10–17 (GRPNVGKS), 57–61 (DTPGL), 119–122 (NKCE), 186–193 (GRPNAGKS), 233–237 (DTAGL), and 298–301 (NKWD) each bind GTP. Residues 358–443 (KKITTSKLNE…PIRFIYVKTK (86 aa)) form the KH-like domain.

Belongs to the TRAFAC class TrmE-Era-EngA-EngB-Septin-like GTPase superfamily. EngA (Der) GTPase family. Associates with the 50S ribosomal subunit.

Functionally, GTPase that plays an essential role in the late steps of ribosome biogenesis. The chain is GTPase Der from Rickettsia africae (strain ESF-5).